We begin with the raw amino-acid sequence, 703 residues long: FERM domain-containing protein 7 (703 aa).

An FERM domain is found at 2 to 282 (LHLKVQFLDD…EYHAFFRLSE (281 aa)). The stretch at 525 to 552 (RNMRIKSLQQDLQELQEAMARTSGRSNI) forms a coiled coil.

In terms of tissue distribution, in the developing cerebral cortex, strong expression is observed in the ventricular and intermediate zones at 13 and 17 dpc. At 17 dpc and P0, expression appears to be restricted to the cortical plate. In neonates, highly expressed in cortex, hippocampus, cerebellum, olfactory bulb and eye with little or no expression in liver, kidney, skeletal muscle or heart muscle (at protein level).

Its subcellular location is the cell projection. The protein localises to the neuron projection. The protein resides in the growth cone. Functionally, plays a role in neurite development, may be through the activation of the GTPase RAC1. Plays a role in the control of eye movement and gaze stability. The protein is FERM domain-containing protein 7 of Mus musculus (Mouse).